Consider the following 126-residue polypeptide: Fatty acid-binding protein 2, liver (126 aa).

Residues 54–56, 99–101, and Arg-121 contribute to the cholate site; these read TPN and HIQ.

The protein belongs to the calycin superfamily. Fatty-acid binding protein (FABP) family.

The protein localises to the cytoplasm. Its function is as follows. Binds free fatty acids and their coenzyme A derivatives, bilirubin, and some other small molecules in the cytoplasm. May be involved in intracellular lipid transport. The specificity of axolotl L-FABP differs from that of LB-FABP. Binds 2 ligands per protein molecule. This Ambystoma mexicanum (Axolotl) protein is Fatty acid-binding protein 2, liver.